Consider the following 324-residue polypeptide: Antihemorrhagic factor cHLP-A (324 aa).

The N-terminal stretch at 1–19 (MNSLVALVLLGQIIGSTLS) is a signal peptide. 2 consecutive Cystatin fetuin-A-type domains span residues 21-130 (QLGP…VKCK) and 141-254 (RNCP…SDCV). 6 disulfide bridges follow: Cys28/Cys315, Cys85/Cys96, Cys110/Cys129, Cys143/Cys146, Cys205/Cys217, and Cys230/Cys253. N-linked (GlcNAc...) asparagine glycosylation is present at Asn204. The N-linked (GlcNAc...) asparagine glycan is linked to Asn282.

This sequence belongs to the fetuin family. As to quaternary structure, homodimer. Expressed by the liver.

It localises to the secreted. In terms of biological role, potent inhibitor of hemorrhagic activity but also proteolytic activities. Inhibition occurs by formation of a non-covalent complex between this protein and the proteinases at their metalloproteinase domains. The sequence is that of Antihemorrhagic factor cHLP-A from Gloydius brevicauda (Korean slamosa snake).